A 196-amino-acid chain; its full sequence is Thymidine kinase (196 aa).

Residues 9-16 (SAMNAGKS) and 87-90 (DECQ) contribute to the ATP site. Catalysis depends on Glu-88, which acts as the Proton acceptor. Residues Cys-145, Cys-147, Cys-182, and His-185 each coordinate Zn(2+).

It belongs to the thymidine kinase family. Homotetramer.

The protein localises to the cytoplasm. It catalyses the reaction thymidine + ATP = dTMP + ADP + H(+). This chain is Thymidine kinase, found in Yersinia pestis.